Here is a 41-residue protein sequence, read N- to C-terminus: Large ribosomal subunit protein bL36 (41 aa).

This sequence belongs to the bacterial ribosomal protein bL36 family.

In Methylocella silvestris (strain DSM 15510 / CIP 108128 / LMG 27833 / NCIMB 13906 / BL2), this protein is Large ribosomal subunit protein bL36.